The chain runs to 1394 residues: Cyclic nucleotide-gated channel beta-1 (1394 aa).

Disordered stretches follow at residues 1 to 95, 112 to 253, and 271 to 675; these read MLGW…AHSS, VPQP…QDSA, and VIRG…SQNS. Residues 1-762 lie on the Cytoplasmic side of the membrane; the sequence is MLGWVQRVLP…WKKYQFPQSI (762 aa). Polar residues-rich tracts occupy residues 68–86 and 116–125; these read PQGT…QAQV and AHSSRPSQNI. Composition is skewed to basic and acidic residues over residues 300–312 and 336–355; these read EESH…VDPH and DEEK…RIQE. Residues 356 to 387 show a composition bias toward acidic residues; sequence EKEDEEEEKEDGEEEEEEGREKEEEEGEEKEE. Residues 388 to 408 are compositionally biased toward basic and acidic residues; the sequence is EEGREKEEEEGEKKEEEGREK. A compositionally biased stretch (acidic residues) spans 409 to 418; it reads EEEEGGEKED. Residues 419 to 433 show a composition bias toward basic and acidic residues; that stretch reads EEGREKEEEEGRGKE. Composition is skewed to acidic residues over residues 452-464 and 481-490; these read EGRE…EEEQ and DRSEESETQD. Composition is skewed to low complexity over residues 493 to 508 and 529 to 554; these read EVGG…GAQA and EVGG…AQDQ. Over residues 654–675 the composition is skewed to polar residues; that stretch reads DPTSPQGTDDQDRATSTASQNS. The interval 671 to 681 is calmodulin-binding CaM1; it reads ASQNSAIINDR. An IQ-like motif is present at residues 682–692; it reads LQELVKLFKER. The tract at residues 699-732 is disordered; the sequence is KLIDPDVTSDEESPKPSPAKKAPEPAPEVKPAEA. A helical membrane pass occupies residues 763–793; sequence DPLTNLMYILWLFFVVLAWNWNCWLIPVRWA. Residues 794–798 are Extracellular-facing; it reads FPYQT. A helical transmembrane segment spans residues 799–825; the sequence is PDNIHLWLLMDYLCDLIYLLDITVFQM. Residues 826 to 837 lie on the Cytoplasmic side of the membrane; the sequence is RLQFVRGGDIIT. The helical transmembrane segment at 838–861 threads the bilayer; sequence DKKEMRNNYVKSQRFKMDMLCLLP. Over 862–872 the chain is Extracellular; sequence LDLLYLKFGVN. The helical transmembrane segment at 873-887 threads the bilayer; the sequence is PLLRLPRCLKYMAFF. The Cytoplasmic portion of the chain corresponds to 888 to 900; that stretch reads EFNNRLESILSKA. Positions 900-999 are ion conduction pathway; that stretch reads AYVYRVIRTT…IGQMRDVVGA (100 aa). Residues 901–922 form a helical membrane-spanning segment; the sequence is YVYRVIRTTAYLLYSLHLNSCL. The Extracellular segment spans residues 923–931; the sequence is YYWASAYEG. The next 2 helical transmembrane spans lie at 932–974 and 975–1002; these read LGST…EIVF and QGLN…AATA. Residues 959–962 form a selectivity filter region; sequence TIGG. The Cytoplasmic portion of the chain corresponds to 1003 to 1394; it reads GQTYYRSCMD…EEARKEKEEE (392 aa). The segment at 1082 to 1198 is cyclic nucleotide-binding domain; the sequence is RQMIFDMLKR…LLRKKARRML (117 aa). 3',5'-cyclic GMP contacts are provided by glycine 1143, glutamate 1144, serine 1146, arginine 1156, and threonine 1157. Residue arginine 1156 coordinates 3',5'-cyclic AMP. The calmodulin-binding CaM2 stretch occupies residues 1261–1267; the sequence is QQQLLEQ. The segment at 1265 to 1394 is disordered; the sequence is LEQAKSSEDA…EEARKEKEEE (130 aa). A compositionally biased stretch (pro residues) spans 1285 to 1326; sequence EQPPRPEPPAPEAPAPEPTAPEPLAPEAPAPEAPAPSSPPPA. 2 stretches are compositionally biased toward basic and acidic residues: residues 1329 to 1345 and 1364 to 1376; these read ERPE…EHPV and VPEK…KKEE.

The protein belongs to the cyclic nucleotide-gated cation channel (TC 1.A.1.5) family. CNGB1 subfamily. In terms of assembly, the rod cyclic nucleotide-gated channel is a heterotetramer composed of CNGA1 and CNGB1 subunits with 3:1 stoichiometry. CNGA1:CNGB1 channel binds Ca(2+)-bound CALM1 via CaM1 and CaM2 regions of the CNGB1 subunit; this interaction modulates the affinity of the channel for cNMPs in response to intracellular Ca(2+) levels. The olfactory cyclic nucleotide-gated channel is a heterotetramer composed of CNGA2, CNGA4 and CNGB1 subunits with 2:1:1 stoichiometry. In terms of tissue distribution, retina, testis, kidney, heart and brain.

Its subcellular location is the membrane. It catalyses the reaction Ca(2+)(in) = Ca(2+)(out). The catalysed reaction is Na(+)(in) = Na(+)(out). The enzyme catalyses K(+)(in) = K(+)(out). It carries out the reaction NH4(+)(in) = NH4(+)(out). It catalyses the reaction Rb(+)(in) = Rb(+)(out). The catalysed reaction is Li(+)(in) = Li(+)(out). The enzyme catalyses Cs(+)(in) = Cs(+)(out). Functionally, pore-forming subunit of the rod cyclic nucleotide-gated channel. Mediates rod photoresponses at dim light converting transient changes in intracellular cGMP levels into electrical signals. In the dark, cGMP levels are high and keep the channel open enabling a steady inward current carried by Na(+) and Ca(2+) ions that leads to membrane depolarization and neurotransmitter release from synaptic terminals. Upon photon absorption cGMP levels decline leading to channel closure and membrane hyperpolarization that ultimately slows neurotransmitter release and signals the presence of light, the end point of the phototransduction cascade. Pore-forming subunit of the olfactory cyclic nucleotide-gated channel. Operates in the cilia of olfactory sensory neurons where chemical stimulation of the odorant is converted to an electrical signal. Mediates odorant-induced cAMP-dependent Ca(2+) influx triggering neuron depolarization. The rise of intracellular Ca(2+) levels potentiates the olfactory response by activating Ca(2+)-dependent Cl(-) channels, but it also serves as a negative feedback signal to desensitize the channel for rapid adaptation to odorants. Conducts cGMP- and cAMP-gated ion currents, with permeability for monovalent and divalent cations. The selectivity for Ca(2+) over Na(+) increases with cGMP concentrations, whereas the selectivity among monovalent ions is independent of the cGMP levels. In Bos taurus (Bovine), this protein is Cyclic nucleotide-gated channel beta-1.